The chain runs to 118 residues: uncharacterized protein (118 aa).

The first 27 residues, 1 to 27, serve as a signal peptide directing secretion; that stretch reads MPIKEPDVWALIWSWLQTNLSSSSAQS.

This is an uncharacterized protein from Haemophilus influenzae (strain ATCC 51907 / DSM 11121 / KW20 / Rd).